The chain runs to 300 residues: Geranylgeranyl pyrophosphate synthase (300 aa).

Methionine 1 carries the N-acetylmethionine modification. Residues lysine 25, arginine 28, and histidine 57 each contribute to the isopentenyl diphosphate site. Mg(2+)-binding residues include aspartate 64 and aspartate 68. Arginine 73 serves as a coordination point for dimethylallyl diphosphate. Residue arginine 74 participates in isopentenyl diphosphate binding. Residues lysine 151, threonine 152, glutamine 185, lysine 202, and lysine 212 each contribute to the dimethylallyl diphosphate site.

It belongs to the FPP/GGPP synthase family. As to quaternary structure, homohexamer; trimer of homodimers. It depends on Mg(2+) as a cofactor. Abundantly expressed in testis. Found in other tissues to a lower extent. Expressed in dermal fibroblast and skeletal muscle.

It is found in the cytoplasm. It localises to the perinuclear region. The protein localises to the myofibril. The protein resides in the sarcomere. Its subcellular location is the z line. The enzyme catalyses isopentenyl diphosphate + dimethylallyl diphosphate = (2E)-geranyl diphosphate + diphosphate. It catalyses the reaction isopentenyl diphosphate + (2E)-geranyl diphosphate = (2E,6E)-farnesyl diphosphate + diphosphate. The catalysed reaction is isopentenyl diphosphate + (2E,6E)-farnesyl diphosphate = (2E,6E,10E)-geranylgeranyl diphosphate + diphosphate. The protein operates within isoprenoid biosynthesis; farnesyl diphosphate biosynthesis; farnesyl diphosphate from geranyl diphosphate and isopentenyl diphosphate: step 1/1. Its pathway is isoprenoid biosynthesis; geranyl diphosphate biosynthesis; geranyl diphosphate from dimethylallyl diphosphate and isopentenyl diphosphate: step 1/1. It participates in isoprenoid biosynthesis; geranylgeranyl diphosphate biosynthesis; geranylgeranyl diphosphate from farnesyl diphosphate and isopentenyl diphosphate: step 1/1. Its activity is regulated as follows. Subject to product inhibition by geranylgeranyl diphosphate. In terms of biological role, catalyzes the trans-addition of the three molecules of IPP onto DMAPP to form geranylgeranyl pyrophosphate, an important precursor of carotenoids and geranylated proteins. The protein is Geranylgeranyl pyrophosphate synthase (GGPS1) of Homo sapiens (Human).